The sequence spans 87 residues: U14-lycotoxin-Ls1c (87 aa).

An N-terminal signal peptide occupies residues 1 to 20 (MNSKVFAVLLLLALLTCILS). One can recognise a WAP domain in the interval 21 to 66 (EKYCPTPRNTSCKKMNIKNNCCRDSDCTSNAFCCAEPCGNFCHKAS). Disulfide bonds link Cys-24-Cys-54, Cys-32-Cys-58, Cys-41-Cys-53, Cys-42-Cys-80, and Cys-47-Cys-62.

This sequence belongs to the venom protein 11 family. 01 (wap-1) subfamily. In terms of processing, contains 5 disulfide bonds. As to expression, expressed by the venom gland.

It localises to the secreted. Has antibacterial activity. This is U14-lycotoxin-Ls1c from Lycosa singoriensis (Wolf spider).